The sequence spans 226 residues: Elongation factor 1-delta (226 aa).

Positions 82–131 (SSVATPPVADTKASAAEDDDDDDVDLFGEETEEEKKASEERAAAVKASGK) are disordered. Positions 97-113 (AEDDDDDDVDLFGEETE) are enriched in acidic residues. Basic and acidic residues predominate over residues 114–124 (EEKKASEERAA).

The protein belongs to the EF-1-beta/EF-1-delta family. As to quaternary structure, EF-1 is composed of 4 subunits: alpha, beta (1B-alpha=beta'), delta (1B-beta), and gamma (1B-gamma).

In terms of biological role, EF-1-beta and EF-1-beta' stimulate the exchange of GDP bound to EF-1-alpha to GTP. This chain is Elongation factor 1-delta, found in Spuriopimpinella brachycarpa (Chamnamul).